The following is a 74-amino-acid chain: UPF0346 protein LCA_0996 (74 aa).

It belongs to the UPF0346 family.

In Latilactobacillus sakei subsp. sakei (strain 23K) (Lactobacillus sakei subsp. sakei), this protein is UPF0346 protein LCA_0996.